The following is a 92-amino-acid chain: Small ribosomal subunit protein uS19 (92 aa).

Belongs to the universal ribosomal protein uS19 family.

Protein S19 forms a complex with S13 that binds strongly to the 16S ribosomal RNA. The sequence is that of Small ribosomal subunit protein uS19 from Thermosynechococcus vestitus (strain NIES-2133 / IAM M-273 / BP-1).